Reading from the N-terminus, the 208-residue chain is Large ribosomal subunit protein uL3 (208 aa).

The interval 116 to 148 (GFQGVIKRHGQSRGPMAHGSRYHRRPGSMGPVA) is disordered.

Belongs to the universal ribosomal protein uL3 family. As to quaternary structure, part of the 50S ribosomal subunit. Forms a cluster with proteins L14 and L19.

Functionally, one of the primary rRNA binding proteins, it binds directly near the 3'-end of the 23S rRNA, where it nucleates assembly of the 50S subunit. This Streptococcus pyogenes serotype M12 (strain MGAS2096) protein is Large ribosomal subunit protein uL3.